Reading from the N-terminus, the 848-residue chain is Adenylate cyclase (848 aa).

The segment at 1 to 535 is catalytic; it reads MYLYIETLKQ…DVSHHFPLRL (535 aa). A regulatory region spans residues 541–848; that stretch reads KALYSPCEIR…DAPLLQQYFS (308 aa). His609 bears the Phosphohistidine; by CRR mark.

This sequence belongs to the adenylyl cyclase class-1 family.

It is found in the cytoplasm. It catalyses the reaction ATP = 3',5'-cyclic AMP + diphosphate. In Escherichia coli O6:H1 (strain CFT073 / ATCC 700928 / UPEC), this protein is Adenylate cyclase (cyaA).